Here is a 279-residue protein sequence, read N- to C-terminus: Probable endonuclease 4 (279 aa).

Zn(2+) contacts are provided by His-69, His-109, Glu-145, Asp-179, His-182, His-216, Asp-229, His-231, and Glu-261.

Belongs to the AP endonuclease 2 family. Zn(2+) is required as a cofactor.

The catalysed reaction is Endonucleolytic cleavage to 5'-phosphooligonucleotide end-products.. Its function is as follows. Endonuclease IV plays a role in DNA repair. It cleaves phosphodiester bonds at apurinic or apyrimidinic (AP) sites, generating a 3'-hydroxyl group and a 5'-terminal sugar phosphate. The sequence is that of Probable endonuclease 4 from Chlorobium luteolum (strain DSM 273 / BCRC 81028 / 2530) (Pelodictyon luteolum).